The sequence spans 132 residues: Small ribosomal subunit protein uS8 (132 aa).

It belongs to the universal ribosomal protein uS8 family. As to quaternary structure, part of the 30S ribosomal subunit. Contacts proteins S5 and S12.

Its function is as follows. One of the primary rRNA binding proteins, it binds directly to 16S rRNA central domain where it helps coordinate assembly of the platform of the 30S subunit. This Halalkalibacterium halodurans (strain ATCC BAA-125 / DSM 18197 / FERM 7344 / JCM 9153 / C-125) (Bacillus halodurans) protein is Small ribosomal subunit protein uS8.